Reading from the N-terminus, the 253-residue chain is Triosephosphate isomerase (253 aa).

9-11 lines the substrate pocket; that stretch reads NWK. His94 functions as the Electrophile in the catalytic mechanism. The active-site Proton acceptor is the Glu163. Substrate contacts are provided by residues Gly169, Ser209, and 230–231; that span reads GG.

This sequence belongs to the triosephosphate isomerase family. In terms of assembly, homodimer.

It is found in the cytoplasm. The enzyme catalyses D-glyceraldehyde 3-phosphate = dihydroxyacetone phosphate. The protein operates within carbohydrate biosynthesis; gluconeogenesis. It participates in carbohydrate degradation; glycolysis; D-glyceraldehyde 3-phosphate from glycerone phosphate: step 1/1. In terms of biological role, involved in the gluconeogenesis. Catalyzes stereospecifically the conversion of dihydroxyacetone phosphate (DHAP) to D-glyceraldehyde-3-phosphate (G3P). The sequence is that of Triosephosphate isomerase from Dehalococcoides mccartyi (strain CBDB1).